Reading from the N-terminus, the 180-residue chain is Large ribosomal subunit protein uL5c (180 aa).

This sequence belongs to the universal ribosomal protein uL5 family. As to quaternary structure, part of the 50S ribosomal subunit; contacts the 5S rRNA.

The protein localises to the plastid. The protein resides in the chloroplast. Binds 5S rRNA, forms part of the central protuberance of the 50S subunit. The chain is Large ribosomal subunit protein uL5c (rpl5) from Tetradesmus obliquus (Green alga).